Consider the following 478-residue polypeptide: Zinc metalloproteinase/disintegrin (478 aa).

The N-terminal stretch at 1–20 (MIQVLLVTICLAAFPYQGSS) is a signal peptide. Residues 21–187 (IILESGNVND…PIKKASHLNL (167 aa)) constitute a propeptide that is removed on maturation. Residues 193–389 (RYVEIVIVVD…QKPQCILKKP (197 aa)) form the Peptidase M12B domain. Disulfide bonds link C304–C384, C344–C368, and C346–C351. Zn(2+) is bound at residue H329. The active site involves E330. H333 and H339 together coordinate Zn(2+). Positions 390–408 (LRTDTVSTPVSGNELLEAR) are excised as a propeptide. The region spanning 397–478 (TPVSGNELLE…ADCPRNVLYG (82 aa)) is the Disintegrin domain. Cystine bridges form between C411–C420, C413–C421, C426–C440, C434–C464, C439–C443, and C452–C471. Residues 474 to 478 (NVLYG) constitute a propeptide that is removed on maturation.

This sequence belongs to the venom metalloproteinase (M12B) family. P-II subfamily. P-IIa sub-subfamily. Zn(2+) is required as a cofactor. Expressed by the venom gland.

Its subcellular location is the secreted. Snake venom zinc metalloproteinase that causes hemorrhage by provoking the degradation of the sub-endothelial matrix proteins (fibronectin, laminin, type IV collagen, nidogen, and gelatins). Functionally, displays low cytotoxicity. In vitro, inhibits cancer cell migration (human breast cancer cell line MDA-MB-231) with a significant rate after 24 hours of incubation. This Crotalus durissus collilineatus (Brazilian rattlesnake) protein is Zinc metalloproteinase/disintegrin (MPII).